The chain runs to 945 residues: Oxysterol-binding protein homolog C23H4.01c (945 aa).

Residues 1–131 (METVEIRSKS…PKTVTFLLTA (131 aa)) enclose the GOLD domain. The region spanning 149 to 243 (KQIISGTLLK…WCNALEKAKN (95 aa)) is the PH domain. Ser-288, Ser-419, and Ser-421 each carry phosphoserine. Disordered stretches follow at residues 396-555 (ESGA…LPHS) and 846-894 (LEKD…MEEK). Residues 443–454 (TSSISDTSSNSS) are compositionally biased toward low complexity. The segment covering 460 to 470 (LNATSLASTVD) has biased composition (polar residues). Basic and acidic residues predominate over residues 482–499 (ESNKENDIKRKQPFHDLM). Ser-503 bears the Phosphoserine mark.

Belongs to the OSBP family.

It is found in the cytoplasm. The sequence is that of Oxysterol-binding protein homolog C23H4.01c from Schizosaccharomyces pombe (strain 972 / ATCC 24843) (Fission yeast).